A 194-amino-acid polypeptide reads, in one-letter code: Xanthine phosphoribosyltransferase (194 aa).

2 residues coordinate xanthine: L20 and N27. 128–132 (ANGQA) contacts 5-phospho-alpha-D-ribose 1-diphosphate. A xanthine-binding site is contributed by K156.

This sequence belongs to the purine/pyrimidine phosphoribosyltransferase family. Xpt subfamily. As to quaternary structure, homodimer.

The protein resides in the cytoplasm. The catalysed reaction is XMP + diphosphate = xanthine + 5-phospho-alpha-D-ribose 1-diphosphate. It participates in purine metabolism; XMP biosynthesis via salvage pathway; XMP from xanthine: step 1/1. Converts the preformed base xanthine, a product of nucleic acid breakdown, to xanthosine 5'-monophosphate (XMP), so it can be reused for RNA or DNA synthesis. This chain is Xanthine phosphoribosyltransferase, found in Bacillus licheniformis (strain ATCC 14580 / DSM 13 / JCM 2505 / CCUG 7422 / NBRC 12200 / NCIMB 9375 / NCTC 10341 / NRRL NRS-1264 / Gibson 46).